Reading from the N-terminus, the 242-residue chain is Universal stress protein PHOS32 (242 aa).

The N-terminal 43 residues, Met-1–Thr-43, are a transit peptide targeting the chloroplast. The interval Met-1–Gly-45 is disordered. Basic residues predominate over residues Lys-15 to Ser-30. Pro-19 is a binding site for ATP. At Ser-21 the chain carries Phosphoserine; by MAPK3 and MAPK6. The segment covering Ser-31–Ala-44 has biased composition (low complexity). ATP is bound by residues Val-83, Gly-168–Arg-178, and Ser-186–Ser-188. The residue at position 219 (Ser-219) is a Phosphoserine.

This sequence belongs to the universal stress protein A family. Post-translationally, phosphorylated by MAPK3 and MAPK6 after pathogenic elicitation (e.g. bacterial flg22, Phytophthora infestans zoospores and xylanase).

The protein resides in the plastid. The protein localises to the chloroplast. In Arabidopsis thaliana (Mouse-ear cress), this protein is Universal stress protein PHOS32.